Here is a 128-residue protein sequence, read N- to C-terminus: Small ribosomal subunit protein bS6 (128 aa).

The protein belongs to the bacterial ribosomal protein bS6 family.

In terms of biological role, binds together with bS18 to 16S ribosomal RNA. The protein is Small ribosomal subunit protein bS6 of Geotalea uraniireducens (strain Rf4) (Geobacter uraniireducens).